A 427-amino-acid chain; its full sequence is Serine--tRNA ligase (427 aa).

L-serine is bound at residue 232 to 234 (TAE). Residue 263–265 (RSE) coordinates ATP. Glutamate 286 is an L-serine binding site. Residue 350–353 (EISS) coordinates ATP. Serine 385 is a binding site for L-serine.

Belongs to the class-II aminoacyl-tRNA synthetase family. Type-1 seryl-tRNA synthetase subfamily. In terms of assembly, homodimer. The tRNA molecule binds across the dimer.

The protein resides in the cytoplasm. The catalysed reaction is tRNA(Ser) + L-serine + ATP = L-seryl-tRNA(Ser) + AMP + diphosphate + H(+). It carries out the reaction tRNA(Sec) + L-serine + ATP = L-seryl-tRNA(Sec) + AMP + diphosphate + H(+). The protein operates within aminoacyl-tRNA biosynthesis; selenocysteinyl-tRNA(Sec) biosynthesis; L-seryl-tRNA(Sec) from L-serine and tRNA(Sec): step 1/1. Its function is as follows. Catalyzes the attachment of serine to tRNA(Ser). Is also able to aminoacylate tRNA(Sec) with serine, to form the misacylated tRNA L-seryl-tRNA(Sec), which will be further converted into selenocysteinyl-tRNA(Sec). The sequence is that of Serine--tRNA ligase from Aromatoleum aromaticum (strain DSM 19018 / LMG 30748 / EbN1) (Azoarcus sp. (strain EbN1)).